The following is a 296-amino-acid chain: Probable AP endonuclease (296 aa).

A disulfide bridge connects residues Cys16 and Cys20. Zn(2+) is bound by residues His78, His115, Glu142, His182, His218, Asp231, His233, and Glu271.

The protein belongs to the AP endonuclease 2 family. It depends on Zn(2+) as a cofactor.

It is found in the host nucleus. The protein resides in the host cytoplasm. Its subcellular location is the virion. Its function is as follows. Endonuclease that plays a role in DNA repair. Cleaves phosphodiester bonds on the 5' side of apurinic or apyrimidinic sites (AP sites). In addition to endonuclease activity, the ASFV enzyme has a proofreading 3'-5' exonuclease activity that is considerably more efficient in the elimination of a mismatch than in that of a correctly paired base. Displays 3'-phosphatase and 3'-repair diesterase activities. The single nucleotide gaps generated by the AP endonuclease are filled by the viral AP endonuclease and DNA ligase. This is Probable AP endonuclease from Ornithodoros (relapsing fever ticks).